We begin with the raw amino-acid sequence, 517 residues long: UDP-N-acetylmuramyl-tripeptide synthetase (517 aa).

UDP-N-acetyl-alpha-D-muramoyl-L-alanyl-D-glutamate is bound at residue Ser38. Residue Gly116 to Thr122 coordinates ATP. UDP-N-acetyl-alpha-D-muramoyl-L-alanyl-D-glutamate contacts are provided by residues Asn160, Thr162–Thr163, Ser189, and Arg197. Position 231 is an N6-carboxylysine (Lys231).

It belongs to the MurCDEF family. MurE subfamily. Carboxylation is probably crucial for Mg(2+) binding and, consequently, for the gamma-phosphate positioning of ATP.

It localises to the cytoplasm. The protein operates within cell wall biogenesis; peptidoglycan biosynthesis. Functionally, catalyzes the addition of an amino acid to the nucleotide precursor UDP-N-acetylmuramoyl-L-alanyl-D-glutamate (UMAG) in the biosynthesis of bacterial cell-wall peptidoglycan. This chain is UDP-N-acetylmuramyl-tripeptide synthetase, found in Lacticaseibacillus paracasei (strain ATCC 334 / BCRC 17002 / CCUG 31169 / CIP 107868 / KCTC 3260 / NRRL B-441) (Lactobacillus paracasei).